We begin with the raw amino-acid sequence, 1060 residues long: Histone lysine demethylase PHF8 (1060 aa).

Residues 41 to 92 form a PHD-type zinc finger; it reads PVYCLCRLPYDVTRFMIECDMCQDWFHGSCVGVEEEKAADIDLYHCPNCEVL. S69 bears the Phosphoserine; by CDK1 mark. A disordered region spans residues 100 to 120; the sequence is KRRGSSKGHDTHKGKPVKTGS. The interval 101 to 115 is linker; that stretch reads RRGSSKGHDTHKGKP. S120 carries the post-translational modification Phosphoserine; by CDK1. The region spanning 231–387 is the JmjC domain; that stretch reads FSDTRLSNLV…MQLKAYEIEK (157 aa). T280 provides a ligand contact to substrate. Positions 283 and 285 each coordinate Fe cation. Substrate is bound at residue K300. Position 355 (H355) interacts with Fe cation. The segment covering 508 to 517 has biased composition (polar residues); sequence AHSTSVSMSR. The interval 508–534 is disordered; sequence AHSTSVSMSRLSLPSKNGSKKKGLKPK. Residue S651 is modified to Phosphoserine. Y704 bears the Phosphotyrosine mark. A phosphothreonine mark is found at T705 and T706. Residue S722 is modified to Phosphoserine. Disordered regions lie at residues 768-840, 852-902, and 915-1046; these read QSSS…EQDS, YPSL…GTRV, and KLAQ…KQRL. Low complexity-rich tracts occupy residues 769–778 and 785–804; these read SSSSSPATSS and GGQD…VSNS. 6 positions are modified to phosphoserine: S804, S826, S834, S854, S857, and S880. Acidic residues predominate over residues 826–839; the sequence is SEEEEENASLDEQD. Basic and acidic residues predominate over residues 891–900; the sequence is KQDRPVREGT. Over residues 924–934 the composition is skewed to basic residues; that stretch reads AQKKKYIKKKP. The span at 1018–1030 shows a compositional bias: polar residues; the sequence is RRPSVGSQSNQAG.

It belongs to the JHDM1 histone demethylase family. JHDM1D subfamily. As to quaternary structure, interacts with POLR1B, UBTF, SETD1A, HCFC1, E2F1 and ZNF711. Interacts with ZNF263; recruited to the SIX3 promoter along with other proteins involved in chromatin modification and transcriptional corepression where it contributes to transcriptional repression. Requires Fe(2+) as cofactor. Post-translationally, phosphorylation at Ser-69 and Ser-120 are required for dissociation from chromatin and accumulation of H4K20Me1 levels during prophase.

It is found in the nucleus. The protein resides in the nucleolus. It catalyses the reaction N(6),N(6)-dimethyl-L-lysyl(36)-[histone H3] + 2 2-oxoglutarate + 2 O2 = L-lysyl(36)-[histone H3] + 2 formaldehyde + 2 succinate + 2 CO2. The enzyme catalyses N(6),N(6)-dimethyl-L-lysyl(9)-[histone H3] + 2 2-oxoglutarate + 2 O2 = L-lysyl(9)-[histone H3] + 2 formaldehyde + 2 succinate + 2 CO2. In terms of biological role, histone lysine demethylase with selectivity for the di- and monomethyl states that plays a key role cell cycle progression, rDNA transcription and brain development. Demethylates mono- and dimethylated histone H3 'Lys-9' residue (H3K9Me1 and H3K9Me2), dimethylated H3 'Lys-27' (H3K27Me2) and monomethylated histone H4 'Lys-20' residue (H4K20Me1). Acts as a transcription activator as H3K9Me1, H3K9Me2, H3K27Me2 and H4K20Me1 are epigenetic repressive marks. Involved in cell cycle progression by being required to control G1-S transition. Acts as a coactivator of rDNA transcription, by activating polymerase I (pol I) mediated transcription of rRNA genes. Required for brain development, probably by regulating expression of neuron-specific genes. Only has activity toward H4K20Me1 when nucleosome is used as a substrate and when not histone octamer is used as substrate. May also have weak activity toward dimethylated H3 'Lys-36' (H3K36Me2), however, the relevance of this result remains unsure in vivo. Specifically binds trimethylated 'Lys-4' of histone H3 (H3K4me3), affecting histone demethylase specificity: has weak activity toward H3K9Me2 in absence of H3K4me3, while it has high activity toward H3K9me2 when binding H3K4me3. Positively modulates transcription of histone demethylase KDM5C, acting synergistically with transcription factor ARX; synergy may be related to enrichment of histone H3K4me3 in regulatory elements. The protein is Histone lysine demethylase PHF8 (PHF8) of Homo sapiens (Human).